A 402-amino-acid chain; its full sequence is Protein indeterminate-domain 12 (402 aa).

The tract at residues 47–66 (TETHKPKKKRGLPGNPDPDA) is disordered. Serine 72 bears the Phosphoserine mark. 2 consecutive C2H2-type zinc fingers follow at residues 82–104 (FVCE…RRGH) and 124–154 (YVCP…CRKH). The Nuclear localization signal motif lies at 146–153 (IKKHFCRK). A C2H2-type 2; degenerate zinc finger spans residues 159 to 183 (WKCEKCSKFYAVQSDWKAHTKICGT). Residues cysteine 161, cysteine 164, histidine 177, cysteine 181, cysteine 188, cysteine 190, histidine 203, and cysteine 207 each coordinate Zn(2+). A CCHC-type 2; atypical zinc finger spans residues 186-209 (YRCDCGTLFSRKDTFITHRAFCDA). The tract at residues 196-208 (RKDTFITHRAFCD) is SHR-binding.

It is found in the nucleus. Probable transcription factor. This Arabidopsis thaliana (Mouse-ear cress) protein is Protein indeterminate-domain 12.